The chain runs to 518 residues: Putative BTB/POZ domain and WD-repeat protein R731 (518 aa).

A BTB domain is found at 22–92 (TDCQLHLTDS…FYGFPLEEPN (71 aa)). The segment at 224-246 (NHEESSDDEVNDDEDTDNEDTDD) is disordered. The span at 228 to 246 (SSDDEVNDDEDTDNEDTDD) shows a compositional bias: acidic residues. 2 WD repeats span residues 391-430 (NHST…SLIK) and 437-475 (FLKF…IIQN).

It belongs to the mimivirus BTB/WD family.

The chain is Putative BTB/POZ domain and WD-repeat protein R731 from Acanthamoeba polyphaga (Amoeba).